The sequence spans 113 residues: Hydrogenase maturation factor HybF (113 aa).

The Ni(2+) site is built by His-2 and Glu-3. Zn(2+) is bound by residues Cys-73, Cys-76, Cys-89, and Cys-92.

It belongs to the HypA/HybF family. HybF subfamily.

Its function is as follows. Involved in the maturation of [NiFe] hydrogenases. Required for nickel insertion into the metal center of the hydrogenase. In Morganella morganii (Proteus morganii), this protein is Hydrogenase maturation factor HybF.